Consider the following 186-residue polypeptide: Ribosome maturation factor RimM (186 aa).

The region spanning asparagine 100–leucine 182 is the PRC barrel domain.

Belongs to the RimM family. In terms of assembly, binds ribosomal protein uS19.

The protein localises to the cytoplasm. In terms of biological role, an accessory protein needed during the final step in the assembly of 30S ribosomal subunit, possibly for assembly of the head region. Essential for efficient processing of 16S rRNA. May be needed both before and after RbfA during the maturation of 16S rRNA. It has affinity for free ribosomal 30S subunits but not for 70S ribosomes. This is Ribosome maturation factor RimM from Rippkaea orientalis (strain PCC 8801 / RF-1) (Cyanothece sp. (strain PCC 8801)).